A 197-amino-acid chain; its full sequence is Adenylate kinase 1 (197 aa).

Residue 19–24 coordinates ATP; the sequence is GSGKGT. Residues 39 to 68 are NMP; the sequence is SSGDLLRAEVQSGSPKGKELKAMMERGELV. AMP-binding positions include serine 40, arginine 45, 95–98, and glutamine 102; that span reads GYPR. Positions 132–142 are LID; sequence KRAETSNRVDD. Residue arginine 133 coordinates ATP. AMP-binding residues include arginine 139 and arginine 150. ATP is bound at residue glycine 178.

The protein belongs to the adenylate kinase family. AK1 subfamily. Monomer. It depends on Mg(2+) as a cofactor.

The protein localises to the cytoplasm. The catalysed reaction is AMP + ATP = 2 ADP. Its pathway is purine metabolism; purine nucleotide biosynthesis. Functionally, catalyzes the reversible transfer of the terminal phosphate group between ATP and AMP. Plays an important role in cellular energy homeostasis and in adenine nucleotide metabolism. The polypeptide is Adenylate kinase 1 (Schistosoma mansoni (Blood fluke)).